Here is a 270-residue protein sequence, read N- to C-terminus: 23S rRNA (adenosine(1067)-2'-O)-methyltransferase (270 aa).

Residues Arg135, Arg165, Gly218, Ile238, and Leu247 each contribute to the S-adenosyl-L-methionine site.

Belongs to the class IV-like SAM-binding methyltransferase superfamily. RNA methyltransferase TsnR/AvirB family.

The catalysed reaction is adenosine(1067) in 23S rRNA + S-adenosyl-L-methionine = 2'-O-methyladenosine(1067) in 23S rRNA + S-adenosyl-L-homocysteine + H(+). Functionally, specifically methylates the adenosine-1067 in 23S ribosomal RNA. Confers resistance to antibiotic thiostrepton. This chain is 23S rRNA (adenosine(1067)-2'-O)-methyltransferase, found in Streptomyces laurentii.